The sequence spans 213 residues: Adenylate kinase (213 aa).

10-15 (GSGKGT) contributes to the ATP binding site. The interval 30–59 (STGDMLRTTVNKESVLGKNIQAIIKLGNLV) is NMP. AMP is bound by residues Thr31, Arg36, 57-59 (NLV), 85-88 (GFPR), and Gln92. The segment at 122-159 (GRMVHEPSGRIYHVTFNPPKQKGKDDITGENLIIRQDD) is LID. Residues Arg123 and 132–133 (IY) contribute to the ATP site. AMP is bound by residues Arg156 and Arg167. Cys199 lines the ATP pocket.

It belongs to the adenylate kinase family. As to quaternary structure, monomer.

The protein resides in the cytoplasm. The enzyme catalyses AMP + ATP = 2 ADP. It participates in purine metabolism; AMP biosynthesis via salvage pathway; AMP from ADP: step 1/1. Its function is as follows. Catalyzes the reversible transfer of the terminal phosphate group between ATP and AMP. Plays an important role in cellular energy homeostasis and in adenine nucleotide metabolism. In Baumannia cicadellinicola subsp. Homalodisca coagulata, this protein is Adenylate kinase.